Reading from the N-terminus, the 522-residue chain is Man(5)GlcNAc(2)-PP-dolichol translocation protein RFT1 (522 aa).

Helical transmembrane passes span 35–55 (DVLG…LFLT), 75–95 (LLWL…YLWY), 108–128 (VLLS…FSVI), 143–165 (FAIG…LFMF), 177–197 (AQYI…YIYI), 322–342 (VVGV…PVVI), 354–374 (GGAL…INGI), 400–420 (IIHL…GFIV), 457–477 (TSIF…LFAT), and 479–499 (PGLS…ILTA).

This sequence belongs to the RFT1 family.

Its subcellular location is the endoplasmic reticulum membrane. Its pathway is protein modification; protein glycosylation. Intramembrane glycolipid transporter that operates in the biosynthetic pathway of dolichol-linked oligosaccharides, the glycan precursors employed in protein asparagine (N)-glycosylation. The sequential addition of sugars to dolichol pyrophosphate produces dolichol-linked oligosaccharides containing fourteen sugars, including two GlcNAcs, nine mannoses and three glucoses. Once assembled, the oligosaccharide is transferred from the lipid to nascent proteins by oligosaccharyltransferases. The assembly of dolichol-linked oligosaccharides begins on the cytosolic side of the endoplasmic reticulum membrane and finishes in its lumen. RFT1 could mediate the translocation of the cytosolically oriented intermediate DolPP-GlcNAc2Man5, produced by ALG11, into the ER lumen where dolichol-linked oligosaccharides assembly continues. However, the intramembrane lipid transporter activity could not be confirmed in vitro. In Caenorhabditis elegans, this protein is Man(5)GlcNAc(2)-PP-dolichol translocation protein RFT1.